The following is a 601-amino-acid chain: Elongation factor 4 (601 aa).

Residues 6 to 188 (NYIRNFSIVA…AIVRQLPPPH (183 aa)) enclose the tr-type G domain. GTP is bound by residues 18-23 (DHGKST) and 135-138 (NKVD).

It belongs to the TRAFAC class translation factor GTPase superfamily. Classic translation factor GTPase family. LepA subfamily.

It localises to the cell inner membrane. The enzyme catalyses GTP + H2O = GDP + phosphate + H(+). Functionally, required for accurate and efficient protein synthesis under certain stress conditions. May act as a fidelity factor of the translation reaction, by catalyzing a one-codon backward translocation of tRNAs on improperly translocated ribosomes. Back-translocation proceeds from a post-translocation (POST) complex to a pre-translocation (PRE) complex, thus giving elongation factor G a second chance to translocate the tRNAs correctly. Binds to ribosomes in a GTP-dependent manner. In Bartonella quintana (strain Toulouse) (Rochalimaea quintana), this protein is Elongation factor 4.